We begin with the raw amino-acid sequence, 189 residues long: UPF0200 protein Smar_1234 (189 aa).

Residue glycine 10–serine 17 participates in ATP binding.

The protein belongs to the UPF0200 family.

The sequence is that of UPF0200 protein Smar_1234 from Staphylothermus marinus (strain ATCC 43588 / DSM 3639 / JCM 9404 / F1).